Consider the following 937-residue polypeptide: uncharacterized protein (937 aa).

Residue Thr-2 is modified to N-acetylthreonine. The disordered stretch occupies residues 281–937; sequence NESPSSNINT…KKGKGKGGRK (657 aa). A compositionally biased stretch (low complexity) spans 290-308; sequence TTTTSTTTTTTTTTSSPVV. Residue Thr-292 is the Charge relay system of the active site. 8 stretches are compositionally biased toward basic and acidic residues: residues 309-402, 411-431, 469-489, 512-532, 600-615, 667-687, 738-758, and 780-872; these read EESK…EKQQ, AEKE…RLEA, AEKE…KLEA, and AEKE…KVEE. The stretch at 345-802 forms a coiled coil; it reads VDDSKEKEEK…KAAEETKVEE (458 aa). Residues 887–897 show a composition bias toward acidic residues; sequence EETEEGEEVDE. Low complexity predominate over residues 898-924; the sequence is ASNTTTEQTTTNANQPKKPNNNNNNNK. Positions 925-937 are enriched in basic residues; the sequence is GKGKKGKGKGGRK.

The protein belongs to the AB hydrolase superfamily.

This is an uncharacterized protein from Dictyostelium discoideum (Social amoeba).